A 679-amino-acid chain; its full sequence is Cysteine-rich receptor-like protein kinase 29 (679 aa).

Positions 1–23 (MEHVRVIFFFACFLTLAPFHAFA) are cleaved as a signal peptide. Residues 24-286 (QVDSYEFDPD…RTGKGKGGSK (263 aa)) are Extracellular-facing. Gnk2-homologous domains are found at residues 30-134 (FDPD…NRTI) and 140-249 (TNPT…TWRF). N-linked (GlcNAc...) asparagine glycans are attached at residues N41, N45, N71, N107, N131, and N187. Residues 260–281 (PPAIQPADSPQSAARTERTGKG) form a disordered region. The chain crosses the membrane as a helical span at residues 287-307 (VIIAIVIPILLVALLAICLCL). The Cytoplasmic segment spans residues 308–679 (VLKWRKNKSG…DVTVSEFSPR (372 aa)). In terms of domain architecture, Protein kinase spans 357–637 (FSSENELGRG…SLMLNSYSFT (281 aa)). ATP-binding positions include 363–371 (LGRGGFGSV) and K385. Y430 carries the post-translational modification Phosphotyrosine. The active-site Proton acceptor is the D482. At S486 the chain carries Phosphoserine. T524 carries the phosphothreonine modification. Y532 is modified (phosphotyrosine). Residues 659-679 (SSTEGLQMSSNDVTVSEFSPR) are disordered.

It belongs to the protein kinase superfamily. Ser/Thr protein kinase family. CRK subfamily.

The protein resides in the membrane. It carries out the reaction L-seryl-[protein] + ATP = O-phospho-L-seryl-[protein] + ADP + H(+). It catalyses the reaction L-threonyl-[protein] + ATP = O-phospho-L-threonyl-[protein] + ADP + H(+). The polypeptide is Cysteine-rich receptor-like protein kinase 29 (CRK29) (Arabidopsis thaliana (Mouse-ear cress)).